A 166-amino-acid polypeptide reads, in one-letter code: NADH-ubiquinone oxidoreductase chain 6 (166 aa).

5 consecutive transmembrane segments (helical) span residues 1-21, 26-46, 47-67, 87-107, and 139-159; these read MMYFVYLLSILLVLGFMAFAS, IYGGLSLVLSGGVGCGIVVSL, GGSFLGLIVFLVYLGGMLVVF, VFTNLLIMVGMLGVIWYYFSG, and CGGWELIFSGWILFLTIFVVL.

The protein belongs to the complex I subunit 6 family. In terms of assembly, core subunit of respiratory chain NADH dehydrogenase (Complex I) which is composed of 45 different subunits.

It is found in the mitochondrion inner membrane. It catalyses the reaction a ubiquinone + NADH + 5 H(+)(in) = a ubiquinol + NAD(+) + 4 H(+)(out). Its function is as follows. Core subunit of the mitochondrial membrane respiratory chain NADH dehydrogenase (Complex I) which catalyzes electron transfer from NADH through the respiratory chain, using ubiquinone as an electron acceptor. Essential for the catalytic activity and assembly of complex I. In Ornithorhynchus anatinus (Duckbill platypus), this protein is NADH-ubiquinone oxidoreductase chain 6 (MT-ND6).